The sequence spans 524 residues: MNSDQENINSYNFESIKIGDYKCNVNRIPGDNLYLLSNFNDAEPKYDDKNGVHLEFNYKKIGESKTMRLNDGATSTVLIEGARNMNANEYFPKFVEKKKSFAEHLIRKTFAKGYESPSEIQALVVPELIQRKDTLIQFKSGTGKTHAFLFGCLWGFDPDDDVLQYIFITSSHEVATQIYEQAVFLLPETAKIALCIGQKKSPNSFGNSGFKTPIGTSSLNHKPKSIKEEREEIRQAQIIICTMGRFYDILCNKGWITTTRYLKAICVDEFDNIVASKTKQRSSTVMNTEDQMAEIIQKIESEAPKNSENGAQRVFFSATVSPYAIKIANSYFRKYSPIIGEPFIVLLDSEDYTLEGIRQYYVQCSNYFEKKEIILDLLKQCRIAQAIIFANRIETANEIKKLLDEQEVPISSAVFHGDLPAVTRKNIHKDFVENKIRLLISTDLTSRGLDVQGINVVFNFDMPDTLETYIHRVGRSGRYGRKGVSISLILVNQNKNEMEKVEQIDNCSKQSKMSQLPGDLSTLL.

The 214-residue stretch at V125–I338 folds into the Helicase ATP-binding domain. F138–T145 contacts ATP. Positions D268 to D271 match the DEFD box motif. The Helicase C-terminal domain occupies I373–L524.

Belongs to the DEAD box helicase family. eIF4A subfamily.

It carries out the reaction ATP + H2O = ADP + phosphate + H(+). Putative ATP-dependent RNA helicase. The chain is Putative ATP-dependent RNA helicase R458 from Acanthamoeba polyphaga mimivirus (APMV).